A 138-amino-acid chain; its full sequence is Unique cartilage matrix-associated protein (138 aa).

Residues 1–27 (MSWRRVILLSSLLALVLLCMLQEGTSA) form the signal peptide. Residues 28 to 64 (SVGSRQAAAEGVQEGVKQKIFMQESDASNFLKRRGKR) constitute a propeptide, ucma-N. Residues 58-78 (LKRRGKRSPKSRDEVNAENRQ) are disordered. Residues 67–78 (KSRDEVNAENRQ) are compositionally biased toward basic and acidic residues. Residues 78–122 (QRLRDDELRREYYEEQRNEFENFVEEQRDEQEERTREAVEQWRQW) are a coiled coil.

This sequence belongs to the UCMA family. Post-translationally, proteolytically cleaved by a furin-like convertase to generate a persistent C-terminal fragment found in almost the entire cartilage matrix, and affecting osteoblast differentiation. In terms of processing, sulfated on one or two tyrosine residues within the tryptic peptide 121-135. In terms of tissue distribution, predominantly expressed in resting chondrocytes.

The protein localises to the secreted. It localises to the extracellular space. Its subcellular location is the extracellular matrix. It is found in the golgi apparatus. The protein resides in the cytoplasm. The protein localises to the cytoskeleton. Its function is as follows. May be involved in the negative control of osteogenic differentiation of osteochondrogenic precursor cells in peripheral zones of fetal cartilage and at the cartilage-bone interface. The polypeptide is Unique cartilage matrix-associated protein (Ucma) (Mus musculus (Mouse)).